A 311-amino-acid chain; its full sequence is Cell division protein FtsQ (311 aa).

The tract at residues 1–28 is disordered; it reads MTTRSPARPLIARRSTPAPTPAPHDPAP. At 1-46 the chain is on the cytoplasmic side; that stretch reads MTTRSPARPLIARRSTPAPTPAPHDPAPSRLSYRVTRLWLTPIFRK. A helical membrane pass occupies residues 47–67; the sequence is ALHLGIPVFALFAAVTWYLGD. At 68-311 the chain is on the periplasmic side; the sequence is ETRVAELFEA…AERPDGDTRG (244 aa). The POTRA domain maps to 91–159; sequence FRVNVLGIDG…GYLAVRIDER (69 aa).

This sequence belongs to the FtsQ/DivIB family. FtsQ subfamily.

Its subcellular location is the cell inner membrane. In terms of biological role, essential cell division protein. This Jannaschia sp. (strain CCS1) protein is Cell division protein FtsQ.